The sequence spans 96 residues: Mitochondrial import inner membrane translocase subunit Tim13-A (96 aa).

Positions 47–70 (CFRKCIGKPGGSLDNSEQKCIAMC) match the Twin CX3C motif motif. Cystine bridges form between C47/C70 and C51/C66.

Belongs to the small Tim family. As to quaternary structure, heterohexamer; composed of 3 copies of TIMM8 (TIMM8A or TIMM8B) and 3 copies of TIMM13, named soluble 70 kDa complex. Associates with the TIM22 complex, whose core is composed of TIMM22.

It is found in the mitochondrion inner membrane. Mitochondrial intermembrane chaperone that participates in the import and insertion of some multi-pass transmembrane proteins into the mitochondrial inner membrane. Also required for the transfer of beta-barrel precursors from the TOM complex to the sorting and assembly machinery (SAM complex) of the outer membrane. Acts as a chaperone-like protein that protects the hydrophobic precursors from aggregation and guide them through the mitochondrial intermembrane space. The TIMM8-TIMM13 complex mediates the import of some proteins while the predominant TIMM9-TIMM10 70 kDa complex mediates the import of much more proteins. This chain is Mitochondrial import inner membrane translocase subunit Tim13-A (timm13-a), found in Xenopus laevis (African clawed frog).